A 222-amino-acid chain; its full sequence is MKSINILSFLLLSSTLSLVAFARSFSSENPIVLPSTCHDDDNLVLPEVYDQDGHPLRIGQRYIINNPLIGAGAVYLYNIGNLQCPNAVLQHMSIPQFLGEGTPVVFVRKSESDYGDVVRVMTGVYIKFFVKTTKLCVDQTVWKVNHEGLVVTGGQVGNENDIFKIRKTDLVTPEGSKFVYKLLHCPSHLQCKNIGGNFKNGYPRLVTVDDDKDFLPFVFIKA.

The N-terminal stretch at 1 to 26 (MKSINILSFLLLSSTLSLVAFARSFS) is a signal peptide. Positions 27-42 (SENPIVLPSTCHDDDN) are excised as a propeptide. The short motif at 29–34 (NPIVLP) is the Vacuolar targeting signal element. Cystine bridges form between C84–C136 and C185–C191.

The protein belongs to the protease inhibitor I3 (leguminous Kunitz-type inhibitor) family. Tuber.

The protein resides in the vacuole. In terms of biological role, putative inhibitor of cysteine proteases. Does not inhibit papain. May protect the plant by inhibiting proteases of invading organisms. The protein is Cysteine protease inhibitor 9 of Solanum tuberosum (Potato).